Reading from the N-terminus, the 401-residue chain is Imidazolonepropionase (401 aa).

Positions 66 and 68 each coordinate Fe(3+). Positions 66 and 68 each coordinate Zn(2+). R75, Y138, and H171 together coordinate 4-imidazolone-5-propanoate. Residue Y138 coordinates N-formimidoyl-L-glutamate. H236 serves as a coordination point for Fe(3+). H236 is a binding site for Zn(2+). A 4-imidazolone-5-propanoate-binding site is contributed by Q239. D311 is a binding site for Fe(3+). D311 provides a ligand contact to Zn(2+). N313 and G315 together coordinate N-formimidoyl-L-glutamate. T316 serves as a coordination point for 4-imidazolone-5-propanoate.

Belongs to the metallo-dependent hydrolases superfamily. HutI family. The cofactor is Zn(2+). Requires Fe(3+) as cofactor.

The protein resides in the cytoplasm. It carries out the reaction 4-imidazolone-5-propanoate + H2O = N-formimidoyl-L-glutamate. Its pathway is amino-acid degradation; L-histidine degradation into L-glutamate; N-formimidoyl-L-glutamate from L-histidine: step 3/3. Its function is as follows. Catalyzes the hydrolytic cleavage of the carbon-nitrogen bond in imidazolone-5-propanoate to yield N-formimidoyl-L-glutamate. It is the third step in the universal histidine degradation pathway. This is Imidazolonepropionase from Pseudomonas putida (strain ATCC 700007 / DSM 6899 / JCM 31910 / BCRC 17059 / LMG 24140 / F1).